The following is a 367-amino-acid chain: CCCH-type zinc finger protein moe-3 (367 aa).

The span at 1-15 shows a compositional bias: basic and acidic residues; that stretch reads MSKVKGDLEKSDKRP. Positions 1–57 are disordered; the sequence is MSKVKGDLEKSDKRPPSSMSTGSADSGVFSSGVHASSPSHSQGSSSQSGPPSPTTQL. Positions 30 to 49 are enriched in low complexity; that stretch reads SSGVHASSPSHSQGSSSQSG. Residues 63–92 adopt a coiled-coil conformation; sequence ETANLIAVNEQLRKEIAENKQIQTNQMRAL. A disordered region spans residues 107–126; the sequence is SISPHHGFPQRPPRGERRMQ. 2 C3H1-type zinc fingers span residues 130 to 158 and 172 to 200; these read SYKTVICQAWLESKTCTFAENCRFAHGEE and KYKTKLCDKYTTTGLCPYGKRCLFIHPDN. The tract at residues 235-268 is disordered; sequence NTRNSYNQQPPPMGGLEMQSSPMKSSSDSSHMRS. A compositionally biased stretch (low complexity) spans 252–268; the sequence is MQSSPMKSSSDSSHMRS.

In terms of tissue distribution, exclusively expressed in the hermaphrodite gonad. Weakly distributed throughout gonadal oocytes from the mitotic stage to the developing diakinesis stage, with expression restricted to the distal region of the gonad.

In terms of biological role, zinc-finger protein that may play a role in oocyte maturation and fertility. The sequence is that of CCCH-type zinc finger protein moe-3 from Caenorhabditis elegans.